The chain runs to 260 residues: CD27 antigen (260 aa).

Residues 1 to 19 (MARPHPWWLCVLGTLVGLS) form the signal peptide. Residues 20–191 (ATPAPKSCPE…RSLCSSDFIR (172 aa)) lie on the Extracellular side of the membrane. TNFR-Cys repeat units follow at residues 26–63 (SCPE…AQCD), 64–104 (PCIP…NAEC), and 105–141 (ACRN…PHPQ). 8 disulfide bridges follow: C27–C39, C40–C53, C43–C62, C65–C81, C84–C96, C87–C104, C106–C120, and C112–C117. N95 carries N-linked (GlcNAc...) asparagine glycosylation. A glycan (O-linked (GalNAc...) serine) is linked at S127. The chain crosses the membrane as a helical span at residues 192-212 (ILVIFSGMFLVFTLAGALFLH). Residues 213–260 (QRRKYRSNKGESPVEPAEPCHYSCPREEEGSTIPIQEDYRKPEPACSP) lie on the Cytoplasmic side of the membrane. Residue S219 is modified to Phosphoserine. Positions 219–260 (SNKGESPVEPAEPCHYSCPREEEGSTIPIQEDYRKPEPACSP) are disordered. Basic and acidic residues predominate over residues 249–260 (EDYRKPEPACSP).

As to quaternary structure, homodimer. Interacts with SIVA1; may play a role in apoptosis through association with SIVA1. Interacts with TRAF2. Interacts ith PTPN6. In terms of processing, phosphorylated. N-glycosylated. Post-translationally, O-glycosylated with core 1 or possibly core 8 glycans. As to expression, found in most T-lymphocytes.

The protein localises to the cell membrane. Costimulatory immune-checkpoint receptor expressed at the surface of T-cells, NK-cells and B-cells which binds to and is activated by its ligand CD70/CD27L expressed by B-cells. The CD70-CD27 signaling pathway mediates antigen-specific T-cell activation and expansion which in turn provides immune surveillance of B-cells. Mechanistically, CD70 ligation activates the TRAF2-PTPN6 axis that subsequently inhibits LCK phosphorylation to promote phenotypic and transcriptional adaptations of T-cell memory. In addition, activation by CD70 on early progenitor cells provides a negative feedback signal to leukocyte differentiation during immune activation and thus modulates hematopoiesis. Negatively regulates the function of Th2 lymphocytes in the adipose tissue. The polypeptide is CD27 antigen (Homo sapiens (Human)).